A 96-amino-acid polypeptide reads, in one-letter code: Large ribosomal subunit protein eL43 (96 aa).

A C4-type zinc finger spans residues 41 to 62 (CPVCAFPKLKRAGTSIWVCDKC).

The protein belongs to the eukaryotic ribosomal protein eL43 family. It depends on Zn(2+) as a cofactor.

The polypeptide is Large ribosomal subunit protein eL43 (Methanococcus vannielii (strain ATCC 35089 / DSM 1224 / JCM 13029 / OCM 148 / SB)).